The primary structure comprises 344 residues: Serpentine receptor class H-72 (344 aa).

The next 7 membrane-spanning stretches (helical) occupy residues 30–50 (GLAF…FFTG), 66–86 (LSLV…SFFI), 110–132 (TVVQ…TLLF), 155–175 (WLAG…FNLA), 221–241 (SIYM…LVIV), 259–279 (YGLI…SVLI), and 292–312 (LVSI…LLVH).

Belongs to the nematode receptor-like protein srh family.

It localises to the membrane. This chain is Serpentine receptor class H-72 (srh-72), found in Caenorhabditis elegans.